The primary structure comprises 153 residues: Large ribosomal subunit protein uL15 (153 aa).

The disordered stretch occupies residues 21 to 41 (RGIGSGKGKTGGRGIKGQKSR). The span at 23–35 (IGSGKGKTGGRGI) shows a compositional bias: gly residues.

The protein belongs to the universal ribosomal protein uL15 family. Part of the 50S ribosomal subunit.

Its function is as follows. Binds to the 23S rRNA. The chain is Large ribosomal subunit protein uL15 from Rickettsia africae (strain ESF-5).